A 44-amino-acid polypeptide reads, in one-letter code: Large ribosomal subunit protein bL34 (44 aa).

Composition is skewed to basic residues over residues 1 to 22 (MKRT…RARM) and 31 to 44 (IRAR…RLSV). Residues 1-44 (MKRTLGGTSRKRKRTSGFRARMRTPDGRNVIRARRKKGRHRLSV) are disordered.

It belongs to the bacterial ribosomal protein bL34 family.

In Nostoc punctiforme (strain ATCC 29133 / PCC 73102), this protein is Large ribosomal subunit protein bL34.